The primary structure comprises 421 residues: Nuclear envelope integral membrane protein 2 (421 aa).

Positions 1–22 (MLPRLWWLVLWLQPLATLPASA) are cleaved as a signal peptide. 6 helical membrane passes run 64–84 (YMWS…IVYI), 147–167 (NIVD…FLYA), 175–195 (VFYY…FVLL), 206–226 (TFGA…CQLM), 238–258 (MYIL…CYSH), and 281–301 (LVYT…VLLF).

Belongs to the NEMP family. In the ovary, highly expressed in somatic cells.

It localises to the nucleus inner membrane. The polypeptide is Nuclear envelope integral membrane protein 2 (Nemp2) (Mus musculus (Mouse)).